Here is a 242-residue protein sequence, read N- to C-terminus: UPF0246 protein SPN23F15130 (242 aa).

The protein belongs to the UPF0246 family.

The protein is UPF0246 protein SPN23F15130 of Streptococcus pneumoniae (strain ATCC 700669 / Spain 23F-1).